Consider the following 409-residue polypeptide: MENTLLWLVILIPGWALSDGSETELDFTWHLSRIPQVVSENTIHLASPTFQADAGVVKATVCGIECQEELPAPSLSQLEESLSYETIFENGTRTLTRVKVQGLVLEPTRNSSVKGAHPRRRRQVYGTDSRFSILDKRFATNFPFNTAVKLSTGCSGTLVSPNHVLTAAHCVHDGKDYVKGSKKLRVGVLKMRNKGGRKKRRGSKRSRREAESAGQSQAHLRESTTQRPGKKSRRGPRVTQGRPSFQWTRVKSTHIPKGWVRGENGGLALDYDYALLELKRAHKQQHMELGVSPTITKLPGGRIHFSGFDNDRDEQLVYRFCSVSEESNDLLYQYCDAEAGSTGSGIYLRLKEPGQKNWKRKIVAVYSGHQWVDVHGVQKDYNVAVRITPLKYAQICLWIHGNAANCAYG.

The first 20 residues, 1–20, serve as a signal peptide directing secretion; that stretch reads MENTLLWLVILIPGWALSDG. Asn90 is a glycosylation site (N-linked (GlcNAc...) asparagine). The Peptidase S1 domain maps to 124 to 404; sequence VYGTDSRFSI…ICLWIHGNAA (281 aa). The cysteines at positions 154 and 170 are disulfide-linked. Residues 188 to 207 show a composition bias toward basic residues; the sequence is VLKMRNKGGRKKRRGSKRSR. A disordered region spans residues 188-247; the sequence is VLKMRNKGGRKKRRGSKRSRREAESAGQSQAHLRESTTQRPGKKSRRGPRVTQGRPSFQW.

Belongs to the peptidase S1 family. As to expression, in ovary, it localizes to the theca cells of pre-antral follicles, the theca and granulosa cells of pre-ovulatory and ovulatory follicles, as well as to the developing corpus luteum.

Its subcellular location is the secreted. The sequence is that of Inactive serine protease 35 (Prss35) from Mus musculus (Mouse).